The primary structure comprises 259 residues: Ribosomal RNA small subunit methyltransferase J (259 aa).

Residues Arg-101–Asp-102, Glu-117–Arg-118, Ser-153–Ser-154, and Asp-176 each bind S-adenosyl-L-methionine.

It belongs to the methyltransferase superfamily. RsmJ family.

Its subcellular location is the cytoplasm. It carries out the reaction guanosine(1516) in 16S rRNA + S-adenosyl-L-methionine = N(2)-methylguanosine(1516) in 16S rRNA + S-adenosyl-L-homocysteine + H(+). In terms of biological role, specifically methylates the guanosine in position 1516 of 16S rRNA. This is Ribosomal RNA small subunit methyltransferase J from Vibrio vulnificus (strain YJ016).